Reading from the N-terminus, the 206-residue chain is Pyridoxine/pyridoxamine 5'-phosphate oxidase (206 aa).

Residues 53 to 58, 68 to 69, Lys-75, and Gln-97 each bind FMN; these read RMVLLK and YT. Lys-58 serves as a coordination point for substrate. Substrate-binding residues include Tyr-115, Arg-119, and Ser-123. FMN contacts are provided by residues 132-133 and Trp-177; that span reads QS. Position 183 to 185 (183 to 185) interacts with substrate; the sequence is RLH. Arg-187 is an FMN binding site.

The protein belongs to the pyridoxamine 5'-phosphate oxidase family. Homodimer. Requires FMN as cofactor.

The catalysed reaction is pyridoxamine 5'-phosphate + O2 + H2O = pyridoxal 5'-phosphate + H2O2 + NH4(+). The enzyme catalyses pyridoxine 5'-phosphate + O2 = pyridoxal 5'-phosphate + H2O2. It participates in cofactor metabolism; pyridoxal 5'-phosphate salvage; pyridoxal 5'-phosphate from pyridoxamine 5'-phosphate: step 1/1. Its pathway is cofactor metabolism; pyridoxal 5'-phosphate salvage; pyridoxal 5'-phosphate from pyridoxine 5'-phosphate: step 1/1. Its function is as follows. Catalyzes the oxidation of either pyridoxine 5'-phosphate (PNP) or pyridoxamine 5'-phosphate (PMP) into pyridoxal 5'-phosphate (PLP). This is Pyridoxine/pyridoxamine 5'-phosphate oxidase from Allorhizobium ampelinum (strain ATCC BAA-846 / DSM 112012 / S4) (Agrobacterium vitis (strain S4)).